Here is a 534-residue protein sequence, read N- to C-terminus: ATP-dependent rRNA helicase RRP3 (534 aa).

A disordered region spans residues 67 to 107 (KQQALQKQQKQQKQQEQENANHNQTESSLSSSSSTTSSSIT). Low complexity-rich tracts occupy residues 68–80 (QQAL…QQKQ) and 91–107 (TESS…SSIT). The Q motif motif lies at 118–146 (KTFKELNLVPDLLESIESMKFTKPTPIQS). The Helicase ATP-binding domain maps to 149–320 (IPHALEGKDI…RASLHNPVRV (172 aa)). Residue 162–169 (AQTGSGKT) coordinates ATP. A DEAD box motif is present at residues 268 to 271 (DEAD). The Helicase C-terminal domain occupies 347-492 (ILIHLLNEFM…EDKPPKEVLD (146 aa)). Basic and acidic residues-rich tracts occupy residues 505–517 (AIRQ…DKRN) and 525–534 (NRDDADREER). Residues 505–534 (AIRQTKEIHDKRNGGGGRRRNRDDADREER) are disordered.

It belongs to the DEAD box helicase family. DDX47/RRP3 subfamily. As to quaternary structure, interacts with the SSU processome.

It is found in the nucleus. It carries out the reaction ATP + H2O = ADP + phosphate + H(+). Functionally, ATP-dependent rRNA helicase required for pre-ribosomal RNA processing. Involved in the maturation of the 35S-pre-rRNA and to its cleavage to mature 18S rRNA. In Candida albicans (strain SC5314 / ATCC MYA-2876) (Yeast), this protein is ATP-dependent rRNA helicase RRP3.